The chain runs to 352 residues: Lipase chaperone (352 aa).

The helical transmembrane segment at 7–28 (LSLVAVVVAGGLTLYWRWPAAV) threads the bilayer.

This sequence belongs to the lipase chaperone family.

It is found in the cell inner membrane. May be involved in the folding of the extracellular lipase during its passage through the periplasm. This is Lipase chaperone (lifO) from Pseudomonas wisconsinensis.